The primary structure comprises 198 residues: MLTMFKVEIVQLPKKVLRQKSKNVNIPLNKTNIELAEKMIYHIDDSQGPNTKFRPGVGVAAVQYGILKNVFYVCVPNDSRLTQRDSSQEVKPEDKYLFRDVIFNPEVIWKSDEMVAISQGEGCLSVDESWPNQEGLVRRHMEIKVKGYSYFQKKEMIWHVKGYVAIVFQHELDHLNGMLFIDRIDPKRLWDKSGIKVL.

Fe cation contacts are provided by C123 and H170. Residue E171 is part of the active site. H174 contacts Fe cation.

The protein belongs to the polypeptide deformylase family. Requires Fe(2+) as cofactor.

The catalysed reaction is N-terminal N-formyl-L-methionyl-[peptide] + H2O = N-terminal L-methionyl-[peptide] + formate. Functionally, removes the formyl group from the N-terminal Met of newly synthesized proteins. Requires at least a dipeptide for an efficient rate of reaction. N-terminal L-methionine is a prerequisite for activity but the enzyme has broad specificity at other positions. The protein is Peptide deformylase of Mycoplasmopsis pulmonis (strain UAB CTIP) (Mycoplasma pulmonis).